A 168-amino-acid chain; its full sequence is RNA pyrophosphohydrolase (168 aa).

The 153-residue stretch at 8 to 160 (PYRTCVGIAL…KRPVYERVAK (153 aa)) folds into the Nudix hydrolase domain. The Nudix box motif lies at 47-68 (GGVDPGEDAWEAAKRELYEETS).

The protein belongs to the Nudix hydrolase family. RppH subfamily. A divalent metal cation is required as a cofactor.

Accelerates the degradation of transcripts by removing pyrophosphate from the 5'-end of triphosphorylated RNA, leading to a more labile monophosphorylated state that can stimulate subsequent ribonuclease cleavage. This Bradyrhizobium sp. (strain ORS 278) protein is RNA pyrophosphohydrolase.